Here is a 365-residue protein sequence, read N- to C-terminus: Metallophosphoesterase 1 homolog (365 aa).

The helical transmembrane segment at 10–30 threads the bilayer; sequence PILLAIILVVYNEYFIFFIAF. Aspartate 54, aspartate 96, asparagine 132, histidine 208, histidine 262, and histidine 264 together coordinate a divalent metal cation. A helical transmembrane segment spans residues 319–339; that stretch reads ILQIMVYIFGGIGIVILAFIL.

The protein belongs to the metallophosphoesterase superfamily. MPPE1 family. The cofactor is Mn(2+).

It is found in the endoplasmic reticulum-Golgi intermediate compartment membrane. Its subcellular location is the golgi apparatus. The protein localises to the cis-Golgi network membrane. In terms of biological role, metallophosphoesterase required for transport of GPI-anchor proteins from the endoplasmic reticulum to the Golgi. Acts in lipid remodeling steps of GPI-anchor maturation by mediating the removal of a side-chain ethanolamine-phosphate (EtNP) from the second Man (Man2) of the GPI intermediate, an essential step for efficient transport of GPI-anchor proteins. In Caenorhabditis elegans, this protein is Metallophosphoesterase 1 homolog.